The following is a 119-amino-acid chain: Ribonuclease P protein component (119 aa).

The protein belongs to the RnpA family. As to quaternary structure, consists of a catalytic RNA component (M1 or rnpB) and a protein subunit.

The catalysed reaction is Endonucleolytic cleavage of RNA, removing 5'-extranucleotides from tRNA precursor.. RNaseP catalyzes the removal of the 5'-leader sequence from pre-tRNA to produce the mature 5'-terminus. It can also cleave other RNA substrates such as 4.5S RNA. The protein component plays an auxiliary but essential role in vivo by binding to the 5'-leader sequence and broadening the substrate specificity of the ribozyme. The chain is Ribonuclease P protein component from Aromatoleum aromaticum (strain DSM 19018 / LMG 30748 / EbN1) (Azoarcus sp. (strain EbN1)).